Here is a 348-residue protein sequence, read N- to C-terminus: tRNA N6-adenosine threonylcarbamoyltransferase (348 aa).

Fe cation-binding residues include H116 and H120. Residues 138–142 (IISGG), D171, G184, and N282 each bind substrate. Position 310 (D310) interacts with Fe cation.

Belongs to the KAE1 / TsaD family. It depends on Fe(2+) as a cofactor.

It is found in the cytoplasm. It carries out the reaction L-threonylcarbamoyladenylate + adenosine(37) in tRNA = N(6)-L-threonylcarbamoyladenosine(37) in tRNA + AMP + H(+). Its function is as follows. Required for the formation of a threonylcarbamoyl group on adenosine at position 37 (t(6)A37) in tRNAs that read codons beginning with adenine. Is involved in the transfer of the threonylcarbamoyl moiety of threonylcarbamoyl-AMP (TC-AMP) to the N6 group of A37, together with TsaE and TsaB. TsaD likely plays a direct catalytic role in this reaction. The chain is tRNA N6-adenosine threonylcarbamoyltransferase from Ehrlichia ruminantium (strain Gardel).